Here is a 108-residue protein sequence, read N- to C-terminus: Tyrosine-protein phosphatase 5 (108 aa).

The Tyrosine-protein phosphatase domain occupies 1-108 (QESTVIVMLT…QGNNPSPIIV (108 aa)). Position 78 (Asp78) interacts with substrate.

It belongs to the protein-tyrosine phosphatase family.

It catalyses the reaction O-phospho-L-tyrosyl-[protein] + H2O = L-tyrosyl-[protein] + phosphate. This Styela plicata (Wrinkled sea squirt) protein is Tyrosine-protein phosphatase 5 (STY-5).